A 409-amino-acid polypeptide reads, in one-letter code: Multifunctional CCA protein (409 aa).

ATP contacts are provided by glycine 8 and arginine 11. Residues glycine 8 and arginine 11 each contribute to the CTP site. The Mg(2+) site is built by aspartate 21 and aspartate 23. ATP contacts are provided by arginine 91, arginine 137, and arginine 140. CTP contacts are provided by arginine 91, arginine 137, and arginine 140. Positions threonine 228–phenylalanine 329 constitute an HD domain.

Belongs to the tRNA nucleotidyltransferase/poly(A) polymerase family. Bacterial CCA-adding enzyme type 1 subfamily. As to quaternary structure, monomer. Can also form homodimers and oligomers. Mg(2+) is required as a cofactor. Ni(2+) serves as cofactor.

It catalyses the reaction a tRNA precursor + 2 CTP + ATP = a tRNA with a 3' CCA end + 3 diphosphate. It carries out the reaction a tRNA with a 3' CCA end + 2 CTP + ATP = a tRNA with a 3' CCACCA end + 3 diphosphate. Its function is as follows. Catalyzes the addition and repair of the essential 3'-terminal CCA sequence in tRNAs without using a nucleic acid template. Adds these three nucleotides in the order of C, C, and A to the tRNA nucleotide-73, using CTP and ATP as substrates and producing inorganic pyrophosphate. tRNA 3'-terminal CCA addition is required both for tRNA processing and repair. Also involved in tRNA surveillance by mediating tandem CCA addition to generate a CCACCA at the 3' terminus of unstable tRNAs. While stable tRNAs receive only 3'-terminal CCA, unstable tRNAs are marked with CCACCA and rapidly degraded. The protein is Multifunctional CCA protein of Pseudomonas fluorescens (strain ATCC BAA-477 / NRRL B-23932 / Pf-5).